The following is a 286-amino-acid chain: Diaminopimelate epimerase (286 aa).

Residues Asn13 and Asn66 each contribute to the substrate site. Cys75 serves as the catalytic Proton donor. Substrate is bound by residues 76-77 (GN), Asn165, Asn198, and 216-217 (ER). Residue Cys225 is the Proton acceptor of the active site. 226–227 (GT) lines the substrate pocket.

This sequence belongs to the diaminopimelate epimerase family. In terms of assembly, homodimer.

The protein resides in the cytoplasm. The catalysed reaction is (2S,6S)-2,6-diaminopimelate = meso-2,6-diaminopimelate. Its pathway is amino-acid biosynthesis; L-lysine biosynthesis via DAP pathway; DL-2,6-diaminopimelate from LL-2,6-diaminopimelate: step 1/1. Functionally, catalyzes the stereoinversion of LL-2,6-diaminopimelate (L,L-DAP) to meso-diaminopimelate (meso-DAP), a precursor of L-lysine and an essential component of the bacterial peptidoglycan. This is Diaminopimelate epimerase from Thermosynechococcus vestitus (strain NIES-2133 / IAM M-273 / BP-1).